A 141-amino-acid polypeptide reads, in one-letter code: Large ribosomal subunit protein uL16 (141 aa).

Over residues Met1 to Gly19 the composition is skewed to basic residues. Residues Met1 to Tyr22 are disordered.

It belongs to the universal ribosomal protein uL16 family. As to quaternary structure, part of the 50S ribosomal subunit.

Binds 23S rRNA and is also seen to make contacts with the A and possibly P site tRNAs. In Nitratiruptor sp. (strain SB155-2), this protein is Large ribosomal subunit protein uL16.